We begin with the raw amino-acid sequence, 252 residues long: N-acetylglucosaminyl-phosphatidylinositol de-N-acetylase (252 aa).

Residues 2-22 (EVVGLLCVAVAVLTWGFLRVW) traverse the membrane as a helical segment. At 23–252 (NSAERMRSPE…YMSVNSLQLL (230 aa)) the chain is on the cytoplasmic side.

Belongs to the PIGL family.

The protein localises to the endoplasmic reticulum membrane. The enzyme catalyses a 6-(N-acetyl-alpha-D-glucosaminyl)-1-(1,2-diacyl-sn-glycero-3-phospho)-1D-myo-inositol + H2O = a 6-(alpha-D-glucosaminyl)-1-(1,2-diacyl-sn-glycero-3-phospho)-1D-myo-inositol + acetate. Its pathway is glycolipid biosynthesis; glycosylphosphatidylinositol-anchor biosynthesis. Functionally, catalyzes the second step of glycosylphosphatidylinositol (GPI) biosynthesis, which is the de-N-acetylation of N-acetylglucosaminyl-phosphatidylinositol. The sequence is that of N-acetylglucosaminyl-phosphatidylinositol de-N-acetylase (Pigl) from Rattus norvegicus (Rat).